The sequence spans 393 residues: Bone morphogenetic protein 15 (393 aa).

A signal peptide spans 1–25 (MVLLSILRILLWGLVLFMEHRVQMT). The propeptide occupies 26-268 (QVGQPSIAHL…DPSLLLRRAR (243 aa)). N-linked (GlcNAc...) asparagine glycosylation is found at Asn-86 and Asn-237. 3 disulfide bridges follow: Cys-292-Cys-358, Cys-321-Cys-390, and Cys-325-Cys-392. Asn-374 is a glycosylation site (N-linked (GlcNAc...) asparagine).

The protein belongs to the TGF-beta family. Homodimer. But, in contrast to other members of this family, cannot be disulfide-linked.

The protein localises to the secreted. In terms of biological role, may be involved in follicular development. Oocyte-specific growth/differentiation factor that stimulates folliculogenesis and granulosa cell (GC) growth. The chain is Bone morphogenetic protein 15 (BMP15) from Ovis aries (Sheep).